The chain runs to 319 residues: tRNA uridine(34) hydroxylase (319 aa).

The Rhodanese domain occupies 133-231 (EDPNSVVIDT…YLEDVSSENS (99 aa)). Catalysis depends on cysteine 191, which acts as the Cysteine persulfide intermediate.

This sequence belongs to the TrhO family.

It carries out the reaction uridine(34) in tRNA + AH2 + O2 = 5-hydroxyuridine(34) in tRNA + A + H2O. Functionally, catalyzes oxygen-dependent 5-hydroxyuridine (ho5U) modification at position 34 in tRNAs. This chain is tRNA uridine(34) hydroxylase, found in Prochlorococcus marinus (strain NATL2A).